The chain runs to 283 residues: 4-diphosphocytidyl-2-C-methyl-D-erythritol kinase (283 aa).

Lys-10 is an active-site residue. 99–109 contacts ATP; sequence PMGGGLGGGSS. Asp-141 is a catalytic residue.

The protein belongs to the GHMP kinase family. IspE subfamily. As to quaternary structure, homodimer.

The enzyme catalyses 4-CDP-2-C-methyl-D-erythritol + ATP = 4-CDP-2-C-methyl-D-erythritol 2-phosphate + ADP + H(+). It participates in isoprenoid biosynthesis; isopentenyl diphosphate biosynthesis via DXP pathway; isopentenyl diphosphate from 1-deoxy-D-xylulose 5-phosphate: step 3/6. In terms of biological role, catalyzes the phosphorylation of the position 2 hydroxy group of 4-diphosphocytidyl-2C-methyl-D-erythritol. This is 4-diphosphocytidyl-2-C-methyl-D-erythritol kinase from Escherichia coli O81 (strain ED1a).